A 159-amino-acid chain; its full sequence is Transcription elongation factor GreA (159 aa).

Residues 3 to 37 (TNKEVVLTYEGLQKLEQELENLKTVKRREVAERIK) adopt a coiled-coil conformation.

This sequence belongs to the GreA/GreB family.

In terms of biological role, necessary for efficient RNA polymerase transcription elongation past template-encoded arresting sites. The arresting sites in DNA have the property of trapping a certain fraction of elongating RNA polymerases that pass through, resulting in locked ternary complexes. Cleavage of the nascent transcript by cleavage factors such as GreA or GreB allows the resumption of elongation from the new 3'terminus. GreA releases sequences of 2 to 3 nucleotides. The polypeptide is Transcription elongation factor GreA (Acetivibrio thermocellus (strain ATCC 27405 / DSM 1237 / JCM 9322 / NBRC 103400 / NCIMB 10682 / NRRL B-4536 / VPI 7372) (Clostridium thermocellum)).